The primary structure comprises 307 residues: Isethionate sulfite-lyase activating enzyme (307 aa).

The Radical SAM core domain occupies 22 to 307 (HDGPGIRTVV…EAVVAQTADS (286 aa)). [4Fe-4S] cluster-binding residues include cysteine 36, cysteine 40, cysteine 43, cysteine 62, cysteine 68, cysteine 71, cysteine 75, cysteine 95, cysteine 98, cysteine 102, and cysteine 106. An S-adenosyl-L-methionine-binding site is contributed by 42–44 (WCS). 2 consecutive 4Fe-4S ferredoxin-type domains span residues 53-85 (VELAYNTGRCLTLAKCVRCVEICTAGAISRAED) and 86-117 (DTISIDRALCNDCEQLCSGACPSNALITYGAH). S-adenosyl-L-methionine is bound by residues glycine 146, 195 to 197 (DIK), and histidine 268.

It belongs to the organic radical-activating enzymes family. As to quaternary structure, monomer. Requires [4Fe-4S] cluster as cofactor.

It carries out the reaction glycyl-[protein] + reduced [flavodoxin] + S-adenosyl-L-methionine = glycin-2-yl radical-[protein] + semiquinone [flavodoxin] + 5'-deoxyadenosine + L-methionine + H(+). The protein operates within organosulfur degradation; alkanesulfonate degradation. Functionally, involved in an anaerobic respiration pathway that converts the sulfonate isethionate (2-hydroxyethanesulfonate) to ammonia, acetate and sulfide. Catalyzes activation of the isethionate sulfite-lyase IseG under anaerobic conditions by generation of an organic free radical on a glycine residue, via a homolytic cleavage of S-adenosyl-L-methionine (SAM). This Nitratidesulfovibrio vulgaris (strain ATCC 29579 / DSM 644 / CCUG 34227 / NCIMB 8303 / VKM B-1760 / Hildenborough) (Desulfovibrio vulgaris) protein is Isethionate sulfite-lyase activating enzyme.